A 112-amino-acid chain; its full sequence is Hydrogenase maturation factor HypA (112 aa).

His-2 provides a ligand contact to Ni(2+). Residues Cys-73, Cys-76, Cys-88, and Cys-91 each contribute to the Zn(2+) site.

This sequence belongs to the HypA/HybF family.

In terms of biological role, involved in the maturation of [NiFe] hydrogenases. Required for nickel insertion into the metal center of the hydrogenase. This chain is Hydrogenase maturation factor HypA, found in Synechococcus elongatus (strain ATCC 33912 / PCC 7942 / FACHB-805) (Anacystis nidulans R2).